The primary structure comprises 199 residues: Pyridoxal 5'-phosphate synthase subunit PdxT (199 aa).

47-49 (GES) is an L-glutamine binding site. The Nucleophile role is filled by Cys-79. Residues Arg-106 and 133–134 (IR) contribute to the L-glutamine site. Residues His-169 and Glu-171 each act as charge relay system in the active site.

The protein belongs to the glutaminase PdxT/SNO family. As to quaternary structure, in the presence of PdxS, forms a dodecamer of heterodimers. Only shows activity in the heterodimer.

The catalysed reaction is aldehydo-D-ribose 5-phosphate + D-glyceraldehyde 3-phosphate + L-glutamine = pyridoxal 5'-phosphate + L-glutamate + phosphate + 3 H2O + H(+). It carries out the reaction L-glutamine + H2O = L-glutamate + NH4(+). It participates in cofactor biosynthesis; pyridoxal 5'-phosphate biosynthesis. Catalyzes the hydrolysis of glutamine to glutamate and ammonia as part of the biosynthesis of pyridoxal 5'-phosphate. The resulting ammonia molecule is channeled to the active site of PdxS. In Desulfitobacterium hafniense (strain DSM 10664 / DCB-2), this protein is Pyridoxal 5'-phosphate synthase subunit PdxT.